The chain runs to 512 residues: Probable DNA ligase (512 aa).

An ATP-binding site is contributed by aspartate 217. Lysine 219 functions as the N6-AMP-lysine intermediate in the catalytic mechanism. Residues arginine 224, arginine 239, glutamate 268, phenylalanine 306, arginine 377, and lysine 383 each contribute to the ATP site.

It belongs to the ATP-dependent DNA ligase family. Mg(2+) is required as a cofactor.

The catalysed reaction is ATP + (deoxyribonucleotide)n-3'-hydroxyl + 5'-phospho-(deoxyribonucleotide)m = (deoxyribonucleotide)n+m + AMP + diphosphate.. Its function is as follows. DNA ligase that seals nicks in double-stranded DNA during DNA replication, DNA recombination and DNA repair. In Beutenbergia cavernae (strain ATCC BAA-8 / DSM 12333 / CCUG 43141 / JCM 11478 / NBRC 16432 / NCIMB 13614 / HKI 0122), this protein is Probable DNA ligase.